Reading from the N-terminus, the 223-residue chain is Keratin-associated protein 5-4 (223 aa).

14 tandem repeats follow at residues Cys21–Pro24, Cys27–Pro30, Cys79–Pro82, Cys89–Pro92, Cys107–Pro110, Cys117–Pro120, Cys135–Pro138, Cys145–Pro148, Cys155–Pro158, Cys173–Pro176, Cys183–Pro186, Cys193–Pro196, Cys203–Pro206, and Cys213–Pro216. Positions Cys21–Pro216 are 14 X 4 AA repeats of C-C-X-P.

This sequence belongs to the KRTAP type 5 family. In terms of assembly, interacts with hair keratins. In terms of tissue distribution, expressed during the active phases of the hair cycle in the medulla and the inner root sheath of the forming hair. Also expressed in the upper layers of the epidermis of skin.

In the hair cortex, hair keratin intermediate filaments are embedded in an interfilamentous matrix, consisting of hair keratin-associated protein (KRTAP), which are essential for the formation of a rigid and resistant hair shaft through their extensive disulfide bond cross-linking with abundant cysteine residues of hair keratins. The matrix proteins include the high-sulfur and high-glycine-tyrosine keratins. This is Keratin-associated protein 5-4 from Mus musculus (Mouse).